The chain runs to 739 residues: Phosphoribosylformylglycinamidine synthase subunit PurL (739 aa).

Residue H52 is part of the active site. ATP-binding residues include Y55 and K94. E96 serves as a coordination point for Mg(2+). Substrate is bound by residues S97–H100 and R119. Residue H98 is the Proton acceptor of the active site. Position 120 (D120) interacts with Mg(2+). Q243 lines the substrate pocket. D273 is a binding site for Mg(2+). E317 to Q319 is a binding site for substrate. Residues D500 and G537 each contribute to the ATP site. N538 contacts Mg(2+). S540 contacts substrate.

It belongs to the FGAMS family. As to quaternary structure, monomer. Part of the FGAM synthase complex composed of 1 PurL, 1 PurQ and 2 PurS subunits.

It is found in the cytoplasm. The catalysed reaction is N(2)-formyl-N(1)-(5-phospho-beta-D-ribosyl)glycinamide + L-glutamine + ATP + H2O = 2-formamido-N(1)-(5-O-phospho-beta-D-ribosyl)acetamidine + L-glutamate + ADP + phosphate + H(+). It functions in the pathway purine metabolism; IMP biosynthesis via de novo pathway; 5-amino-1-(5-phospho-D-ribosyl)imidazole from N(2)-formyl-N(1)-(5-phospho-D-ribosyl)glycinamide: step 1/2. In terms of biological role, part of the phosphoribosylformylglycinamidine synthase complex involved in the purines biosynthetic pathway. Catalyzes the ATP-dependent conversion of formylglycinamide ribonucleotide (FGAR) and glutamine to yield formylglycinamidine ribonucleotide (FGAM) and glutamate. The FGAM synthase complex is composed of three subunits. PurQ produces an ammonia molecule by converting glutamine to glutamate. PurL transfers the ammonia molecule to FGAR to form FGAM in an ATP-dependent manner. PurS interacts with PurQ and PurL and is thought to assist in the transfer of the ammonia molecule from PurQ to PurL. In Enterococcus faecalis (strain ATCC 700802 / V583), this protein is Phosphoribosylformylglycinamidine synthase subunit PurL.